The sequence spans 294 residues: ADP-ribosyl-[dinitrogen reductase] glycohydrolase (294 aa).

ADP-D-ribose is bound by residues 100–102 (NTC), Glu-121, His-158, and Tyr-212. Mn(2+) contacts are provided by Asp-243, Asp-245, and Thr-246.

It belongs to the ADP-ribosylglycohydrolase family. Monomer. Mn(2+) serves as cofactor.

The protein resides in the cytoplasm. It carries out the reaction N(omega)-alpha-(ADP-D-ribosyl)-L-arginyl-[dinitrogen reductase] + H2O = L-arginyl-[dinitrogen reductase] + ADP-D-ribose. Involved in the regulation of nitrogen fixation activity by the reversible ADP-ribosylation of one subunit of the homodimeric dinitrogenase reductase component of the nitrogenase enzyme complex. The ADP-ribosyltransferase (DraT) transfers the ADP-ribose group from NAD to dinitrogenase reductase. The ADP-ribose group is removed through the action of the ADP-ribosylglycohydrolase (DraG, this entry). The chain is ADP-ribosyl-[dinitrogen reductase] glycohydrolase from Rhodospirillum rubrum.